Here is a 483-residue protein sequence, read N- to C-terminus: Probable ATP-dependent RNA helicase DDX49 (483 aa).

The short motif at 2-30 is the Q motif element; it reads AGFAELGLSSWLVEQCRQLGLKQPTPVQL. A Helicase ATP-binding domain is found at 33–207; sequence IPAILEGRDC…GLATNQPFFW (175 aa). 46-53 is an ATP binding site; sequence AKTGSGKT. Residues 152 to 155 carry the DEAD box motif; the sequence is DEAD. The region spanning 218–382 is the Helicase C-terminal domain; sequence QLDQRYLLVP…EFSVEEAEVL (165 aa). Residues 444-483 form a disordered region; the sequence is KEKVEETLKRQKAGRAGHKGRPPRTPSGSHSGPVPSQGLV. Basic residues predominate over residues 453–465; the sequence is RQKAGRAGHKGRP.

This sequence belongs to the DEAD box helicase family. DDX49/DBP8 subfamily.

The protein localises to the nucleus. The protein resides in the nucleolus. It carries out the reaction ATP + H2O = ADP + phosphate + H(+). In terms of biological role, ATP-dependent RNA helicase that plays a role in various aspects of RNA metabolism including the regulation of mRNA export and the levels of pre-ribosomal RNA. Regulates the stability and synthesis of pre-ribosomal RNA and thereby regulates cell proliferation. Also possesses antiviral activity by recognizing gammaherpesvirus transcripts in the context of lytic reactivation. The chain is Probable ATP-dependent RNA helicase DDX49 (DDX49) from Homo sapiens (Human).